The following is a 903-amino-acid chain: Immunoglobulin superfamily member 22 (903 aa).

Ig-like domains are found at residues 67 to 158 (PEFV…LLVT), 232 to 322 (EAIR…AELT), 418 to 508 (PIKF…AIVT), and 606 to 696 (PSVL…LHLS). Fibronectin type-III domains are found at residues 703–798 (FASQ…AKDP) and 804–898 (LVQD…MPPP).

In Homo sapiens (Human), this protein is Immunoglobulin superfamily member 22 (IGSF22).